The chain runs to 97 residues: Protein YcgL (97 aa).

The 85-residue stretch at 1–85 (MLCVIYRSSK…PPEDLLKQHL (85 aa)) folds into the YcgL domain.

The polypeptide is Protein YcgL (Escherichia fergusonii (strain ATCC 35469 / DSM 13698 / CCUG 18766 / IAM 14443 / JCM 21226 / LMG 7866 / NBRC 102419 / NCTC 12128 / CDC 0568-73)).